We begin with the raw amino-acid sequence, 517 residues long: MFS efflux transporter inpD (517 aa).

Positions 1–24 (MEKTQTPSLTPDELSARSSTPFEE) are disordered. 5 helical membrane-spanning segments follow: residues 37 to 57 (LKFSFIFVGLCLSVFQVALSL), 59 to 79 (DIGWYGSAYLFTDCAFQLVFG), 89 to 109 (IVYLGALLLFEIGSIICATAP), 112 to 132 (IALILGRTIAGIGAGGILSGA), and 151 to 171 (ILGAVNGIAFICGPLLAGGII). The N-linked (GlcNAc...) asparagine glycan is linked to Asn172. 9 consecutive transmembrane segments (helical) span residues 178 to 198 (WIFYINPIISAPTFFITVFLL), 219 to 239 (LPAFTLFLGSILCLILALLWG), 247 to 267 (NARIIVLFILFGVIMLAFMLV), 292 to 312 (FFSFCTSGTGFILEYYLPIWL), 328 to 348 (LPIIAAAVVFTTLCGILTPVI), 352 to 372 (VPFMIIATMLLSVGMGLLSTL), 381 to 401 (VLGFQVPAGVGLGCALQQTLV), 412 to 432 (IPIGVSLIVLAQTLGGTIALS), and 485 to 505 (AIVKTWYLSIGLAAASIIGVL).

It belongs to the major facilitator superfamily.

The protein localises to the cell membrane. Functionally, MFS efflux transporter; part of the inp gene cluster that mediates the biosynthesis of fellutamide B, a mycotoxin that acts as a proteasome inhibitor. In the first step of fellutabmide B biosynthesis inpC activates 3-hydroxydodecanoic acid to generate 3-hydroxydodecanoyl-AMP that is then loaded onto the T0 domain of inpB. The 3-hydroxydodecanoyl-S-phosphopantetheinyl-T0 is sequentially extended with L-Asn and L-Gln by the two CAT modules of inpB. The linear lipodipeptide from inpB is then transferred onto inpA for the addition of the third amino acid, L-Leu. Reductive releasing of the lipotripeptide by the TE domain of inpA produces (2S)-fellutamide B. InpF might be involved in the release and transfer of the lipodipeptide from inpB to inpA. The inp cluster-encoded proteasome subunit inpE confers resistance to internally produced fellutamides. The MFS efflux transporter inpD may contribute to fellutamide resistance as well. The polypeptide is MFS efflux transporter inpD (Emericella nidulans (strain FGSC A4 / ATCC 38163 / CBS 112.46 / NRRL 194 / M139) (Aspergillus nidulans)).